Reading from the N-terminus, the 346-residue chain is Protein RecA (346 aa).

67-74 (GPESSGKT) serves as a coordination point for ATP.

Belongs to the RecA family.

The protein localises to the cytoplasm. Functionally, can catalyze the hydrolysis of ATP in the presence of single-stranded DNA, the ATP-dependent uptake of single-stranded DNA by duplex DNA, and the ATP-dependent hybridization of homologous single-stranded DNAs. It interacts with LexA causing its activation and leading to its autocatalytic cleavage. This Mycobacterium ulcerans (strain Agy99) protein is Protein RecA.